The sequence spans 103 residues: MYAVFQSGGKQHRVSEGQTVRLEKLDIATGETIEFDQVLMIANGEDVKIGAPLVSGGVIKAEIVAHGRGDKIKIVKFRRRKHYRKQQGHRQWFTDVKITGISA.

This sequence belongs to the bacterial ribosomal protein bL21 family. Part of the 50S ribosomal subunit. Contacts protein L20.

In terms of biological role, this protein binds to 23S rRNA in the presence of protein L20. This chain is Large ribosomal subunit protein bL21, found in Erwinia tasmaniensis (strain DSM 17950 / CFBP 7177 / CIP 109463 / NCPPB 4357 / Et1/99).